A 265-amino-acid chain; its full sequence is Glutamate racemase (265 aa).

Substrate-binding positions include 9-10 and 41-42; these read DS and YS. The Proton donor/acceptor role is filled by Cys73. 74 to 75 contacts substrate; it reads NT. Cys184 serves as the catalytic Proton donor/acceptor. 185 to 186 lines the substrate pocket; that stretch reads TH.

It belongs to the aspartate/glutamate racemases family.

The catalysed reaction is L-glutamate = D-glutamate. Its pathway is cell wall biogenesis; peptidoglycan biosynthesis. Its function is as follows. Provides the (R)-glutamate required for cell wall biosynthesis. The protein is Glutamate racemase of Actinobacillus pleuropneumoniae serotype 3 (strain JL03).